We begin with the raw amino-acid sequence, 110 residues long: Large ribosomal subunit protein mL60 (110 aa).

It belongs to the mitochondrion-specific ribosomal protein mL60 family. Component of the mitochondrial large ribosomal subunit (mt-LSU). Mature N.crassa 74S mitochondrial ribosomes consist of a small (37S) and a large (54S) subunit. The 37S small subunit contains a 16S ribosomal RNA (16S mt-rRNA) and 32 different proteins. The 54S large subunit contains a 23S rRNA (23S mt-rRNA) and 42 different proteins.

Its subcellular location is the mitochondrion. Its function is as follows. Component of the mitochondrial ribosome (mitoribosome), a dedicated translation machinery responsible for the synthesis of mitochondrial genome-encoded proteins, including at least some of the essential transmembrane subunits of the mitochondrial respiratory chain. The mitoribosomes are attached to the mitochondrial inner membrane and translation products are cotranslationally integrated into the membrane. The sequence is that of Large ribosomal subunit protein mL60 (mrpl31) from Neurospora crassa (strain ATCC 24698 / 74-OR23-1A / CBS 708.71 / DSM 1257 / FGSC 987).